The following is an 887-amino-acid chain: Oxysterol-binding protein-related protein 3 (887 aa).

The interval 1 to 35 is disordered; the sequence is MMSDEKNLGVSQKLVSPSRSTSSCSSKQGSRQDSW. S16 and S34 each carry phosphoserine. Over residues 16–32 the composition is skewed to low complexity; that stretch reads SPSRSTSSCSSKQGSRQ. Residues 51–146 form the PH domain; that stretch reads PPVQKGFLLK…WVSKLRHHRM (96 aa). Positions 161–167 match the FFAT 1 motif; that stretch reads HFFSGST. S200, S251, and S265 each carry phosphoserine. The disordered stretch occupies residues 261–326; the sequence is GSFESPKKEK…KNYSDGSETS (66 aa). The segment covering 268-280 has biased composition (basic residues); it reads KEKRSHRRWRSRA. A phosphoserine mark is found at S304, S309, S320, S323, S371, S372, S410, S425, S437, and S440. The FFAT 2 motif lies at 450-454; it reads EFFDA.

The protein belongs to the OSBP family. In terms of assembly, homodimer. Interacts with RRAS. Interacts (phosphorylated form) with VAPA. Interacts with OSBPL6. Phosphorylation is enhanced in vitro by phorbol-12-myristate-13-acetate (PMA), forskolin and calcium ionophore A23187. Phosphorylation seems to be stimulated in conditions of low cell-cell (or cell-matrix) adhesion. In terms of tissue distribution, expressed in a subset of small lymphocytes (at protein level). Expressed at high concentration in kidney, lymph node and thymus. Expressed at moderate concentration in stomach, jejunum, ileum, appendix, spleen, leukocytes, trachea, lung and thyroid gland. Expressed at low concentration in whole brain, esophagus, duodenum, ileocecum, colon, skeletal muscle, bone marrow, placenta and mammary gland. Isoform 1a, isoform 1b, isoform 1c and isoform 1d are highly expressed in brain, bone marrow, colon, kidney, lung, skeletal muscle, spleen, thymus and thyroid. Not expressed in heart and liver. Isoform 2a, isoform 2b, isoform 2c and isoform 2d are expressed in brain, bone marrow, kidney, skeletal muscle, spleen, thymus and thyroid. Not expressed in heart, liver and lung.

It localises to the endoplasmic reticulum membrane. The protein resides in the cytoplasm. Its subcellular location is the cytosol. The protein localises to the cell membrane. It is found in the cell projection. It localises to the filopodium tip. The protein resides in the nucleus membrane. Phosphoinositide-binding protein which associates with both cell and endoplasmic reticulum (ER) membranes. Can bind to the ER membrane protein VAPA and recruit VAPA to plasma membrane sites, thus linking these intracellular compartments. The ORP3-VAPA complex stimulates RRAS signaling which in turn attenuates integrin beta-1 (ITGB1) activation at the cell surface. With VAPA, may regulate ER morphology. Has a role in regulation of the actin cytoskeleton, cell polarity and cell adhesion. Binds to phosphoinositides with preference for PI(3,4)P2 and PI(3,4,5)P3. Also binds 25-hydroxycholesterol and cholesterol. This is Oxysterol-binding protein-related protein 3 (OSBPL3) from Homo sapiens (Human).